Reading from the N-terminus, the 874-residue chain is Bifunctional uridylyltransferase/uridylyl-removing enzyme (874 aa).

Residues 1-336 (MIDTSTITNP…DNGKTVETIQ (336 aa)) form a uridylyltransferase region. Residues 337-695 (LSDDFQIRGH…LSKKATRGGT (359 aa)) form a uridylyl-removing region. In terms of domain architecture, HD spans 455 to 577 (VDEHSVRLIK…VRDEERLDYL (123 aa)). ACT domains lie at 696–779 (EVFV…RAPR) and 802–874 (TMEL…TPQD).

It belongs to the GlnD family. It depends on Mg(2+) as a cofactor.

It carries out the reaction [protein-PII]-L-tyrosine + UTP = [protein-PII]-uridylyl-L-tyrosine + diphosphate. The enzyme catalyses [protein-PII]-uridylyl-L-tyrosine + H2O = [protein-PII]-L-tyrosine + UMP + H(+). With respect to regulation, uridylyltransferase (UTase) activity is inhibited by glutamine, while glutamine activates uridylyl-removing (UR) activity. Functionally, modifies, by uridylylation and deuridylylation, the PII regulatory proteins (GlnB and homologs), in response to the nitrogen status of the cell that GlnD senses through the glutamine level. Under low glutamine levels, catalyzes the conversion of the PII proteins and UTP to PII-UMP and PPi, while under higher glutamine levels, GlnD hydrolyzes PII-UMP to PII and UMP (deuridylylation). Thus, controls uridylylation state and activity of the PII proteins, and plays an important role in the regulation of nitrogen assimilation and metabolism. The protein is Bifunctional uridylyltransferase/uridylyl-removing enzyme of Photobacterium profundum (strain SS9).